The following is a 340-amino-acid chain: N-acetyl-gamma-glutamyl-phosphate reductase (340 aa).

The active site involves C146.

The protein belongs to the NAGSA dehydrogenase family. Type 1 subfamily.

The protein resides in the cytoplasm. The catalysed reaction is N-acetyl-L-glutamate 5-semialdehyde + phosphate + NADP(+) = N-acetyl-L-glutamyl 5-phosphate + NADPH + H(+). Its pathway is amino-acid biosynthesis; L-arginine biosynthesis; N(2)-acetyl-L-ornithine from L-glutamate: step 3/4. Its function is as follows. Catalyzes the NADPH-dependent reduction of N-acetyl-5-glutamyl phosphate to yield N-acetyl-L-glutamate 5-semialdehyde. In Streptococcus thermophilus (strain CNRZ 1066), this protein is N-acetyl-gamma-glutamyl-phosphate reductase.